A 190-amino-acid chain; its full sequence is Pyridoxal 5'-phosphate synthase subunit PdxT (190 aa).

An L-glutamine-binding site is contributed by 46–48; the sequence is GES. The active-site Nucleophile is the C78. Residues R108 and 137-138 each bind L-glutamine; that span reads IR. Active-site charge relay system residues include H174 and E176.

Belongs to the glutaminase PdxT/SNO family. In the presence of PdxS, forms a dodecamer of heterodimers. Only shows activity in the heterodimer.

It carries out the reaction aldehydo-D-ribose 5-phosphate + D-glyceraldehyde 3-phosphate + L-glutamine = pyridoxal 5'-phosphate + L-glutamate + phosphate + 3 H2O + H(+). The catalysed reaction is L-glutamine + H2O = L-glutamate + NH4(+). It functions in the pathway cofactor biosynthesis; pyridoxal 5'-phosphate biosynthesis. Functionally, catalyzes the hydrolysis of glutamine to glutamate and ammonia as part of the biosynthesis of pyridoxal 5'-phosphate. The resulting ammonia molecule is channeled to the active site of PdxS. The sequence is that of Pyridoxal 5'-phosphate synthase subunit PdxT from Herpetosiphon aurantiacus (strain ATCC 23779 / DSM 785 / 114-95).